The chain runs to 146 residues: Single-stranded DNA-binding protein 1-A, mitochondrial (146 aa).

The transit peptide at 1 to 17 (MFHRPALQVFRQFARCQ) directs the protein to the mitochondrion. Positions 28–140 (INKVQLLGRV…IIADNIIFLS (113 aa)) constitute an SSB domain.

Homotetramer.

It is found in the mitochondrion. The protein resides in the mitochondrion matrix. Its subcellular location is the mitochondrion nucleoid. Binds preferentially and cooperatively to pyrimidine rich single-stranded DNA (ss-DNA). Required to maintain the copy number of mitochondrial DNA (mtDNA) and plays crucial roles during mtDNA replication that stimulate activity of the DNA polymerase at the replication fork. May also function in mtDNA repair. This Xenopus laevis (African clawed frog) protein is Single-stranded DNA-binding protein 1-A, mitochondrial (ssbp1-a).